The chain runs to 223 residues: Deoxyribose-phosphate aldolase (223 aa).

The Proton donor/acceptor role is filled by Asp-92. Catalysis depends on Lys-153, which acts as the Schiff-base intermediate with acetaldehyde. The active-site Proton donor/acceptor is the Lys-182.

This sequence belongs to the DeoC/FbaB aldolase family. DeoC type 1 subfamily.

Its subcellular location is the cytoplasm. It carries out the reaction 2-deoxy-D-ribose 5-phosphate = D-glyceraldehyde 3-phosphate + acetaldehyde. It functions in the pathway carbohydrate degradation; 2-deoxy-D-ribose 1-phosphate degradation; D-glyceraldehyde 3-phosphate and acetaldehyde from 2-deoxy-alpha-D-ribose 1-phosphate: step 2/2. In terms of biological role, catalyzes a reversible aldol reaction between acetaldehyde and D-glyceraldehyde 3-phosphate to generate 2-deoxy-D-ribose 5-phosphate. The sequence is that of Deoxyribose-phosphate aldolase from Mycoplasmoides gallisepticum (strain R(low / passage 15 / clone 2)) (Mycoplasma gallisepticum).